A 343-amino-acid polypeptide reads, in one-letter code: Cell division protein ZipA (343 aa).

Topologically, residues 1–4 (MDLN) are periplasmic. A helical transmembrane segment spans residues 5 to 25 (TILIILGILALIGLVAHGIWS). The Cytoplasmic segment spans residues 26 to 343 (NRREKSQYFD…MAEAAYLARV (318 aa)). The interval 39–98 (AFHRNPQSTGRPSAQASQPMTPNFAQPAKETEQIRQTYQEPQVRQMSSSPEQQTRPTAQA) is disordered. Polar residues-rich tracts occupy residues 43 to 62 (NPQS…TPNF) and 72 to 95 (IRQT…TRPT).

This sequence belongs to the ZipA family. Interacts with FtsZ via their C-terminal domains.

The protein localises to the cell inner membrane. Functionally, essential cell division protein that stabilizes the FtsZ protofilaments by cross-linking them and that serves as a cytoplasmic membrane anchor for the Z ring. Also required for the recruitment to the septal ring of downstream cell division proteins. The chain is Cell division protein ZipA from Actinobacillus succinogenes (strain ATCC 55618 / DSM 22257 / CCUG 43843 / 130Z).